The following is an 883-amino-acid chain: Phosphoenolpyruvate carboxylase (883 aa).

Residues H138 and K546 contribute to the active site.

The protein belongs to the PEPCase type 1 family. Mg(2+) is required as a cofactor.

The catalysed reaction is oxaloacetate + phosphate = phosphoenolpyruvate + hydrogencarbonate. Its function is as follows. Forms oxaloacetate, a four-carbon dicarboxylic acid source for the tricarboxylic acid cycle. The sequence is that of Phosphoenolpyruvate carboxylase from Escherichia coli O7:K1 (strain IAI39 / ExPEC).